Consider the following 279-residue polypeptide: Shikimate dehydrogenase (NADP(+)) (279 aa).

Shikimate is bound by residues 20–22 (SRS) and threonine 67. The active-site Proton acceptor is lysine 71. An NADP(+)-binding site is contributed by aspartate 83. Residues asparagine 92 and aspartate 108 each coordinate shikimate. NADP(+) is bound by residues 134 to 138 (GAGGA) and leucine 223. Tyrosine 225 provides a ligand contact to shikimate. Glycine 246 is a binding site for NADP(+).

It belongs to the shikimate dehydrogenase family. As to quaternary structure, homodimer.

It carries out the reaction shikimate + NADP(+) = 3-dehydroshikimate + NADPH + H(+). It functions in the pathway metabolic intermediate biosynthesis; chorismate biosynthesis; chorismate from D-erythrose 4-phosphate and phosphoenolpyruvate: step 4/7. Functionally, involved in the biosynthesis of the chorismate, which leads to the biosynthesis of aromatic amino acids. Catalyzes the reversible NADPH linked reduction of 3-dehydroshikimate (DHSA) to yield shikimate (SA). The chain is Shikimate dehydrogenase (NADP(+)) from Cereibacter sphaeroides (strain KD131 / KCTC 12085) (Rhodobacter sphaeroides).